Here is a 357-residue protein sequence, read N- to C-terminus: DNA integrity scanning protein DisA (357 aa).

The DAC domain maps to 9 to 147 (DRKLLEILKT…DDIKYILRDS (139 aa)). Residues Gly-76, Leu-94, and 107–111 (TRHRT) contribute to the ATP site.

Belongs to the DisA family. In terms of assembly, homooctamer. Requires Mg(2+) as cofactor.

The catalysed reaction is 2 ATP = 3',3'-c-di-AMP + 2 diphosphate. Functionally, participates in a DNA-damage check-point that is active prior to asymmetric division when DNA is damaged. DisA forms globular foci that rapidly scan along the chromosomes during sporulation, searching for lesions. When a lesion is present, DisA pauses at the lesion site. This triggers a cellular response that culminates in a temporary block in sporulation initiation. In terms of biological role, also has diadenylate cyclase activity, catalyzing the condensation of 2 ATP molecules into cyclic di-AMP (c-di-AMP). c-di-AMP acts as a signaling molecule that couples DNA integrity with progression of sporulation. The rise in c-di-AMP level generated by DisA while scanning the chromosome, operates as a positive signal that advances sporulation; upon encountering a lesion, the DisA focus arrests at the damaged site and halts c-di-AMP synthesis. This chain is DNA integrity scanning protein DisA, found in Clostridium acetobutylicum (strain ATCC 824 / DSM 792 / JCM 1419 / IAM 19013 / LMG 5710 / NBRC 13948 / NRRL B-527 / VKM B-1787 / 2291 / W).